The primary structure comprises 487 residues: Betaine aldehyde dehydrogenase (487 aa).

Residues serine 26 and aspartate 93 each contribute to the K(+) site. An NAD(+)-binding site is contributed by 150 to 152 (GAW). Catalysis depends on lysine 162, which acts as the Charge relay system. NAD(+) is bound by residues 176 to 179 (KPSE) and 229 to 232 (SVPT). K(+) is bound at residue leucine 244. Glutamate 250 acts as the Proton acceptor in catalysis. NAD(+) contacts are provided by glycine 252, cysteine 284, and glutamate 384. The active-site Nucleophile is the cysteine 284. Cysteine 284 is subject to Cysteine sulfenic acid (-SOH). K(+) is bound by residues lysine 454 and glycine 457. The active-site Charge relay system is glutamate 461.

This sequence belongs to the aldehyde dehydrogenase family. Dimer of dimers. The cofactor is K(+).

It carries out the reaction betaine aldehyde + NAD(+) + H2O = glycine betaine + NADH + 2 H(+). Its pathway is amine and polyamine biosynthesis; betaine biosynthesis via choline pathway; betaine from betaine aldehyde: step 1/1. Involved in the biosynthesis of the osmoprotectant glycine betaine. Catalyzes the irreversible oxidation of betaine aldehyde to the corresponding acid. The chain is Betaine aldehyde dehydrogenase from Rhizobium etli (strain CIAT 652).